The chain runs to 140 residues: MSSRSIMGFDYGTKSIGVAIGQELTGTAQPLRAIKANDGIPNWDDIDKLLKEWQPDLLVVGLPLNMDGTEQEITVRARKFGNRLHGRFGKQVEFKDERLTTTDARARLFERGGYRALEKGSVDGVSAQLILEAWMEEQYG.

This sequence belongs to the YqgF nuclease family.

It localises to the cytoplasm. Functionally, could be a nuclease involved in processing of the 5'-end of pre-16S rRNA. The sequence is that of Putative pre-16S rRNA nuclease from Aeromonas hydrophila subsp. hydrophila (strain ATCC 7966 / DSM 30187 / BCRC 13018 / CCUG 14551 / JCM 1027 / KCTC 2358 / NCIMB 9240 / NCTC 8049).